A 289-amino-acid polypeptide reads, in one-letter code: Phosphatidylserine decarboxylase proenzyme (289 aa).

Active-site charge relay system; for autoendoproteolytic cleavage activity residues include aspartate 89, histidine 146, and serine 252. Catalysis depends on serine 252, which acts as the Schiff-base intermediate with substrate; via pyruvic acid; for decarboxylase activity. Serine 252 bears the Pyruvic acid (Ser); by autocatalysis mark.

Belongs to the phosphatidylserine decarboxylase family. PSD-B subfamily. Prokaryotic type I sub-subfamily. As to quaternary structure, heterodimer of a large membrane-associated beta subunit and a small pyruvoyl-containing alpha subunit. Requires pyruvate as cofactor. In terms of processing, is synthesized initially as an inactive proenzyme. Formation of the active enzyme involves a self-maturation process in which the active site pyruvoyl group is generated from an internal serine residue via an autocatalytic post-translational modification. Two non-identical subunits are generated from the proenzyme in this reaction, and the pyruvate is formed at the N-terminus of the alpha chain, which is derived from the carboxyl end of the proenzyme. The autoendoproteolytic cleavage occurs by a canonical serine protease mechanism, in which the side chain hydroxyl group of the serine supplies its oxygen atom to form the C-terminus of the beta chain, while the remainder of the serine residue undergoes an oxidative deamination to produce ammonia and the pyruvoyl prosthetic group on the alpha chain. During this reaction, the Ser that is part of the protease active site of the proenzyme becomes the pyruvoyl prosthetic group, which constitutes an essential element of the active site of the mature decarboxylase.

Its subcellular location is the cell membrane. The catalysed reaction is a 1,2-diacyl-sn-glycero-3-phospho-L-serine + H(+) = a 1,2-diacyl-sn-glycero-3-phosphoethanolamine + CO2. Its pathway is phospholipid metabolism; phosphatidylethanolamine biosynthesis; phosphatidylethanolamine from CDP-diacylglycerol: step 2/2. In terms of biological role, catalyzes the formation of phosphatidylethanolamine (PtdEtn) from phosphatidylserine (PtdSer). This is Phosphatidylserine decarboxylase proenzyme from Shewanella denitrificans (strain OS217 / ATCC BAA-1090 / DSM 15013).